A 45-amino-acid polypeptide reads, in one-letter code: Cytochrome b559 subunit beta (45 aa).

Residues tryptophan 20–alanine 36 form a helical membrane-spanning segment. Histidine 24 contributes to the heme binding site.

The protein belongs to the PsbE/PsbF family. In terms of assembly, heterodimer of an alpha subunit and a beta subunit. PSII is composed of 1 copy each of membrane proteins PsbA, PsbB, PsbC, PsbD, PsbE, PsbF, PsbH, PsbI, PsbJ, PsbK, PsbL, PsbM, PsbT, PsbX, PsbY, PsbZ, Psb30/Ycf12, peripheral proteins PsbO, CyanoQ (PsbQ), PsbU, PsbV and a large number of cofactors. It forms dimeric complexes. Requires heme b as cofactor.

It localises to the cellular thylakoid membrane. In terms of biological role, this b-type cytochrome is tightly associated with the reaction center of photosystem II (PSII). PSII is a light-driven water:plastoquinone oxidoreductase that uses light energy to abstract electrons from H(2)O, generating O(2) and a proton gradient subsequently used for ATP formation. It consists of a core antenna complex that captures photons, and an electron transfer chain that converts photonic excitation into a charge separation. In Nostoc punctiforme (strain ATCC 29133 / PCC 73102), this protein is Cytochrome b559 subunit beta.